The primary structure comprises 686 residues: Phosphomethylpyrimidine synthase (686 aa).

Substrate-binding positions include Asn235, Met264, Tyr293, His329, 349 to 351, 390 to 393, and Glu429; these read SRG and DGMR. Residue His433 participates in Zn(2+) binding. Substrate is bound at residue Tyr456. His497 contacts Zn(2+). Residues Cys577, Cys580, and Cys585 each coordinate [4Fe-4S] cluster. The segment at 659–686 is disordered; it reads IDSSGINDNKNDQQDASVVRVPSLEIEG.

It belongs to the ThiC family. Homodimer. The cofactor is [4Fe-4S] cluster.

It catalyses the reaction 5-amino-1-(5-phospho-beta-D-ribosyl)imidazole + S-adenosyl-L-methionine = 4-amino-2-methyl-5-(phosphooxymethyl)pyrimidine + CO + 5'-deoxyadenosine + formate + L-methionine + 3 H(+). Its pathway is cofactor biosynthesis; thiamine diphosphate biosynthesis. Its function is as follows. Catalyzes the synthesis of the hydroxymethylpyrimidine phosphate (HMP-P) moiety of thiamine from aminoimidazole ribotide (AIR) in a radical S-adenosyl-L-methionine (SAM)-dependent reaction. The polypeptide is Phosphomethylpyrimidine synthase (Shewanella denitrificans (strain OS217 / ATCC BAA-1090 / DSM 15013)).